A 215-amino-acid chain; its full sequence is ATP-dependent Clp protease proteolytic subunit (215 aa).

Ser-115 serves as the catalytic Nucleophile. His-140 is an active-site residue.

It belongs to the peptidase S14 family. In terms of assembly, fourteen ClpP subunits assemble into 2 heptameric rings which stack back to back to give a disk-like structure with a central cavity, resembling the structure of eukaryotic proteasomes.

The protein localises to the cytoplasm. It catalyses the reaction Hydrolysis of proteins to small peptides in the presence of ATP and magnesium. alpha-casein is the usual test substrate. In the absence of ATP, only oligopeptides shorter than five residues are hydrolyzed (such as succinyl-Leu-Tyr-|-NHMec, and Leu-Tyr-Leu-|-Tyr-Trp, in which cleavage of the -Tyr-|-Leu- and -Tyr-|-Trp bonds also occurs).. Functionally, cleaves peptides in various proteins in a process that requires ATP hydrolysis. Has a chymotrypsin-like activity. Plays a major role in the degradation of misfolded proteins. The polypeptide is ATP-dependent Clp protease proteolytic subunit (Anaplasma marginale (strain Florida)).